Here is a 113-residue protein sequence, read N- to C-terminus: Type III endosome membrane protein TEMP (113 aa).

Residues 1-22 (MNETNKTLVGPSELPTASAVAP) are disordered. At 1 to 29 (MNETNKTLVGPSELPTASAVAPGPGTGAR) the chain is on the extracellular side. A glycan (N-linked (GlcNAc...) asparagine) is linked at asparagine 5. Residues 30–50 (AWPVLVGFVLGAVVLSLLIAL) form a helical; Signal-anchor for type III membrane protein membrane-spanning segment. At 51 to 113 (AAKCHLCRRY…TEGSRDHFSL (63 aa)) the chain is on the cytoplasmic side. Positions 66-113 (HRPLPETGRGGRPQVAEDEDDDGFIEDNYIQPGTGELGTEGSRDHFSL) are disordered. A compositionally biased stretch (acidic residues) spans 81-90 (AEDEDDDGFI).

The protein localises to the membrane. The protein resides in the early endosome. It is found in the recycling endosome. It localises to the cell membrane. May be involved in membrane trafficking between endosomes and plasma membrane. The chain is Type III endosome membrane protein TEMP (C1orf210) from Homo sapiens (Human).